The following is a 313-amino-acid chain: Thiamine thiazole synthase (313 aa).

Substrate-binding positions include Ala-71, 92 to 93 (EA), Gly-100, and Val-165. Position 199 is a 2,3-didehydroalanine (Cys) (Cys-199). Residues Asp-201, His-216, Met-268, and 278-280 (RMG) each bind substrate.

It belongs to the THI4 family. As to quaternary structure, homooctamer. Requires Fe cation as cofactor. In terms of processing, during the catalytic reaction, a sulfide is transferred from Cys-199 to a reaction intermediate, generating a dehydroalanine residue.

It is found in the cytoplasm. The protein localises to the nucleus. The enzyme catalyses [ADP-thiazole synthase]-L-cysteine + glycine + NAD(+) = [ADP-thiazole synthase]-dehydroalanine + ADP-5-ethyl-4-methylthiazole-2-carboxylate + nicotinamide + 3 H2O + 2 H(+). Involved in biosynthesis of the thiamine precursor thiazole. Catalyzes the conversion of NAD and glycine to adenosine diphosphate 5-(2-hydroxyethyl)-4-methylthiazole-2-carboxylic acid (ADT), an adenylated thiazole intermediate. The reaction includes an iron-dependent sulfide transfer from a conserved cysteine residue of the protein to a thiazole intermediate. The enzyme can only undergo a single turnover, which suggests it is a suicide enzyme. May have additional roles in adaptation to various stress conditions and in DNA damage tolerance. This chain is Thiamine thiazole synthase, found in Coprinopsis cinerea (strain Okayama-7 / 130 / ATCC MYA-4618 / FGSC 9003) (Inky cap fungus).